The primary structure comprises 142 residues: Large ribosomal subunit protein uL13 (142 aa).

The protein belongs to the universal ribosomal protein uL13 family. Part of the 50S ribosomal subunit.

Its function is as follows. This protein is one of the early assembly proteins of the 50S ribosomal subunit, although it is not seen to bind rRNA by itself. It is important during the early stages of 50S assembly. The polypeptide is Large ribosomal subunit protein uL13 (Lachnospira eligens (strain ATCC 27750 / DSM 3376 / VPI C15-48 / C15-B4) (Eubacterium eligens)).